The sequence spans 633 residues: Probable extracellular metalloproteinase 3 (633 aa).

An N-terminal signal peptide occupies residues 1-18; the sequence is MHGLLLAGLLALPMNVLA. Residues 19 to 246 constitute a propeptide that is removed on maturation; the sequence is HPAEQHASNV…VHNVVDYVAS (228 aa). N410 carries N-linked (GlcNAc...) asparagine glycosylation. H429 is a binding site for Zn(2+). Residue E430 is part of the active site. H433 contributes to the Zn(2+) binding site. N-linked (GlcNAc...) asparagine glycosylation is found at N480 and N622.

Belongs to the peptidase M36 family. Zn(2+) serves as cofactor.

It is found in the secreted. Functionally, secreted metalloproteinase probably acting as a virulence factor. The chain is Probable extracellular metalloproteinase 3 (MEP3) from Trichophyton verrucosum (strain HKI 0517).